The following is a 532-amino-acid chain: Putative L-lactate permease (532 aa).

14 helical membrane passes run 23 to 43 (ALPS…VHLL), 56 to 76 (VVSA…AILF), 101 to 121 (VAQL…ASGF), 129 to 149 (APIL…ALIM), 152 to 172 (VPVS…ALKL), 180 to 200 (IGSI…LLAL), 213 to 233 (IVFI…IAQV), 234 to 254 (NYEF…VWAA), 274 to 294 (AGEV…LIVT), 346 to 366 (LLYV…IPFF), 387 to 407 (PFIA…GGEH), 420 to 440 (ISGS…SFFS), 462 to 482 (GISV…GNMV), and 508 to 528 (IIPM…LVPL).

The protein belongs to the lactate permease family.

It is found in the cell inner membrane. May play a role in L-lactate transport. The protein is Putative L-lactate permease of Haemophilus influenzae (strain ATCC 51907 / DSM 11121 / KW20 / Rd).